The primary structure comprises 65 residues: Large ribosomal subunit protein uL29 (65 aa).

Belongs to the universal ribosomal protein uL29 family.

The protein is Large ribosomal subunit protein uL29 of Delftia acidovorans (strain DSM 14801 / SPH-1).